We begin with the raw amino-acid sequence, 968 residues long: Alanine--tRNA ligase, cytoplasmic (968 aa).

ATP-binding positions include arginine 77, histidine 95, tryptophan 176, and isoleucine 214–asparagine 216. 2 residues coordinate L-alanine: asparagine 216 and aspartate 239. An ATP-binding site is contributed by glycine 243. Zn(2+) contacts are provided by histidine 606, histidine 610, cysteine 724, and histidine 728.

Belongs to the class-II aminoacyl-tRNA synthetase family. Monomer. The cofactor is Zn(2+).

It localises to the cytoplasm. It catalyses the reaction tRNA(Ala) + L-alanine + ATP = L-alanyl-tRNA(Ala) + AMP + diphosphate. In terms of biological role, catalyzes the attachment of alanine to tRNA(Ala) in a two-step reaction: alanine is first activated by ATP to form Ala-AMP and then transferred to the acceptor end of tRNA(Ala). Also edits incorrectly charged tRNA(Ala) via its editing domain. In Caenorhabditis elegans, this protein is Alanine--tRNA ligase, cytoplasmic.